The primary structure comprises 628 residues: Hepatocyte nuclear factor 1-alpha (628 aa).

The tract at residues 1-31 (MVSKLSQLQTELLAALLESGLSKEALIQALG) is dimerization. The region spanning 1–32 (MVSKLSQLQTELLAALLESGLSKEALIQALGE) is the HNF-p1 domain. A disordered region spans residues 47-79 (GESCGGTRGDLTELPNGLGETRGSEDDTDDDGE). S70 bears the Phosphoserine mark. T74 carries the post-translational modification Phosphothreonine. Positions 87–182 (KELENLSPEE…VAQQFTHAGQ (96 aa)) constitute a POU-specific atypical domain. S93 is subject to Phosphoserine. Residue K117 forms a Glycyl lysine isopeptide (Lys-Gly) (interchain with G-Cter in ubiquitin) linkage. Interaction with DNA stretches follow at residues 130 to 132 (QRE), 143 to 149 (HLSQHLN), 155 to 158 (KTQK), and 203 to 206 (RFKW). Residues 183–205 (GGLIEEPTGDELPTKKGRRNRFK) form a disordered region. The Nuclear localization signal motif lies at 197-205 (KKGRRNRFK). Positions 199-279 (GRRNRFKWGP…NRRKEEAFRH (81 aa)) form a DNA-binding region, homeobox; HNF1-type. S247 is modified (phosphoserine). Interaction with DNA stretches follow at residues 263–265 (RVY) and 270–273 (NRRK). 2 disordered regions span residues 284–338 (DTYN…SSSG) and 541–585 (FTSD…LSTS). Pro residues predominate over residues 288–298 (GPPPGPGPGPA). Residue S313 is modified to Phosphoserine. Polar residues-rich tracts occupy residues 324-338 (QSAT…SSSG) and 558-575 (SPAT…NIQH).

Belongs to the HNF1 homeobox family. Binds DNA as a dimer. Heterotetramer with PCBD1; formed by a dimer of dimers. Interacts with PCBD1. Interacts with BHLHE41. Interacts with NR5A2. Interacts with SPOP; this interaction promotes ubiquitination and degradation of HNF1A. Post-translationally, ubiquitinated in s SPOP-dependent manner; leading to prteasomal degradation. Liver.

It is found in the nucleus. In terms of biological role, transcriptional activator that regulates the tissue specific expression of multiple genes, especially in pancreatic islet cells and in liver. Binds to the inverted palindrome 5'-GTTAATNATTAAC-3'. Activates the transcription of CYP1A2, CYP2E1 and CYP3A11. This chain is Hepatocyte nuclear factor 1-alpha (Hnf1a), found in Rattus norvegicus (Rat).